The sequence spans 327 residues: MEIKLIVLSLALLLDRFIGDLPLLWQRISHPVVLLGKAISWGEKNFNDSSLPPSTLRRNGMWLTVGLVAACIFAGLVIRSILPHAGTAGAIAEVVIVAILLAQKSLADHVQAVAQALRDDGIEGGRKAVSMIVGRNPDRLDEGGVSRAAIESLAENASDGIVAPAFWFLVGGLPGLFAYKFINTADSMIGHLNDRYRDFGRFAAKLDDVANYIPARLTGLLAALATSLGHGREAGRQALSIMCRDARLHRSPNAGWPEAAFAGALGLALAGPRQYGAETVEGPMLNATGKREAEARDIDAALVLFWSTMSLMTGLVIAASLVGLFVG.

A run of 4 helical transmembrane segments spans residues 61-78, 80-102, 160-182, and 300-322; these read MWLT…GLVI, SILP…ILLA, GIVA…YKFI, and AALV…ASLV.

Belongs to the CobD/CbiB family.

It localises to the cell membrane. Its pathway is cofactor biosynthesis; adenosylcobalamin biosynthesis. Converts cobyric acid to cobinamide by the addition of aminopropanol on the F carboxylic group. This is Cobalamin biosynthesis protein CobD from Brucella melitensis biotype 1 (strain ATCC 23456 / CCUG 17765 / NCTC 10094 / 16M).